The chain runs to 126 residues: Phosphoribosyl-AMP cyclohydrolase (126 aa).

Aspartate 82 is a Mg(2+) binding site. Cysteine 83 provides a ligand contact to Zn(2+). Mg(2+) contacts are provided by aspartate 84 and aspartate 86. 2 residues coordinate Zn(2+): cysteine 99 and cysteine 106.

The protein belongs to the PRA-CH family. In terms of assembly, homodimer. Requires Mg(2+) as cofactor. The cofactor is Zn(2+).

It localises to the cytoplasm. It catalyses the reaction 1-(5-phospho-beta-D-ribosyl)-5'-AMP + H2O = 1-(5-phospho-beta-D-ribosyl)-5-[(5-phospho-beta-D-ribosylamino)methylideneamino]imidazole-4-carboxamide. The protein operates within amino-acid biosynthesis; L-histidine biosynthesis; L-histidine from 5-phospho-alpha-D-ribose 1-diphosphate: step 3/9. Functionally, catalyzes the hydrolysis of the adenine ring of phosphoribosyl-AMP. This is Phosphoribosyl-AMP cyclohydrolase from Micrococcus luteus (strain ATCC 4698 / DSM 20030 / JCM 1464 / CCM 169 / CCUG 5858 / IAM 1056 / NBRC 3333 / NCIMB 9278 / NCTC 2665 / VKM Ac-2230) (Micrococcus lysodeikticus).